The sequence spans 293 residues: ATP synthase gamma chain (293 aa).

Belongs to the ATPase gamma chain family. F-type ATPases have 2 components, CF(1) - the catalytic core - and CF(0) - the membrane proton channel. CF(1) has five subunits: alpha(3), beta(3), gamma(1), delta(1), epsilon(1). CF(0) has three main subunits: a, b and c.

Its subcellular location is the cell inner membrane. In terms of biological role, produces ATP from ADP in the presence of a proton gradient across the membrane. The gamma chain is believed to be important in regulating ATPase activity and the flow of protons through the CF(0) complex. This Allorhizobium ampelinum (strain ATCC BAA-846 / DSM 112012 / S4) (Agrobacterium vitis (strain S4)) protein is ATP synthase gamma chain.